Consider the following 461-residue polypeptide: F-box protein At3g62230 (461 aa).

The region spanning 7–55 (VDIISTLSDFLLVLIISNLSFKEALSTSRLSTRWRHICRETRNISFRED) is the F-box domain.

In terms of assembly, part of a SCF (ASK-cullin-F-box) protein ligase complex. Interacts with ASK4.

It is found in the nucleus. It functions in the pathway protein modification; protein ubiquitination. Functionally, component of SCF(ASK-cullin-F-box) E3 ubiquitin ligase complexes, which may mediate the ubiquitination and subsequent proteasomal degradation of target proteins. In Arabidopsis thaliana (Mouse-ear cress), this protein is F-box protein At3g62230.